Reading from the N-terminus, the 299-residue chain is Cancer/testis antigen family 47 member B1 (299 aa).

Positions 1 to 10 are enriched in basic and acidic residues; the sequence is MSATGDRHPT. Disordered stretches follow at residues 1 to 102 and 215 to 299; these read MSAT…EGNE and AREP…SKGT. 2 stretches are compositionally biased toward low complexity: residues 20 to 31 and 46 to 60; these read QEGAQAEAAGAG and VPAA…PVEG. Over residues 81-101 the composition is skewed to acidic residues; it reads AEEDSDIGPATEEEEEEEEGN. Residues 215-238 show a composition bias toward basic and acidic residues; it reads AREPAEEAADEKPPEEAAEEKLTE. 2 stretches are compositionally biased toward acidic residues: residues 239–251 and 268–281; these read EATE…EPTS and WDEE…EEEK. Residues 270–298 adopt a coiled-coil conformation; that stretch reads EEAQDAAGEEEKEQEKEKDVENKVKNSKG. Basic and acidic residues predominate over residues 282-293; it reads EQEKEKDVENKV.

The protein belongs to the CT47 family.

The protein is Cancer/testis antigen family 47 member B1 of Homo sapiens (Human).